The sequence spans 137 residues: Large ribosomal subunit protein uL16c (137 aa).

It belongs to the universal ribosomal protein uL16 family. Part of the 50S ribosomal subunit.

It localises to the plastid. Its subcellular location is the chloroplast. This chain is Large ribosomal subunit protein uL16c, found in Vigna unguiculata (Cowpea).